Reading from the N-terminus, the 361-residue chain is Chorismate synthase (361 aa).

Positions 48 and 54 each coordinate NADP(+). FMN-binding positions include 125–127 (RSS), 238–239 (NA), glycine 278, 293–297 (KPTSS), and arginine 319.

The protein belongs to the chorismate synthase family. Homotetramer. It depends on FMNH2 as a cofactor.

The catalysed reaction is 5-O-(1-carboxyvinyl)-3-phosphoshikimate = chorismate + phosphate. It functions in the pathway metabolic intermediate biosynthesis; chorismate biosynthesis; chorismate from D-erythrose 4-phosphate and phosphoenolpyruvate: step 7/7. In terms of biological role, catalyzes the anti-1,4-elimination of the C-3 phosphate and the C-6 proR hydrogen from 5-enolpyruvylshikimate-3-phosphate (EPSP) to yield chorismate, which is the branch point compound that serves as the starting substrate for the three terminal pathways of aromatic amino acid biosynthesis. This reaction introduces a second double bond into the aromatic ring system. This Escherichia coli O139:H28 (strain E24377A / ETEC) protein is Chorismate synthase.